A 271-amino-acid polypeptide reads, in one-letter code: MKIDIVSVFPEYFEVMNLSLMGKAQAKGLLEIKAHNLRDWTHDVHHSVDDTPVGGGAGMVMKPEVWSECLDELLGFSRPSDSSAPSGTPVLIFPNPSAPLFTQRDATELSHADHLLFGCGRYEGYDARIPDYYRSQGVDVREYSIGDYVLNGGEVAVSVMLEAITRLMPGFMGNPDSIVEESYTGEGALLEHRQYTKPAVWRGIAVPDVLLSGDHGKVDRFRRDEALARTAEIRPDLIAALDCKALDKADRKTLMALGWEVSAAHPRRLAD.

Residues G120 and 145 to 150 (IGDYVL) contribute to the S-adenosyl-L-methionine site.

This sequence belongs to the RNA methyltransferase TrmD family. In terms of assembly, homodimer.

It is found in the cytoplasm. It catalyses the reaction guanosine(37) in tRNA + S-adenosyl-L-methionine = N(1)-methylguanosine(37) in tRNA + S-adenosyl-L-homocysteine + H(+). Functionally, specifically methylates guanosine-37 in various tRNAs. The chain is tRNA (guanine-N(1)-)-methyltransferase from Bifidobacterium longum subsp. infantis (strain ATCC 15697 / DSM 20088 / JCM 1222 / NCTC 11817 / S12).